Reading from the N-terminus, the 438-residue chain is Serine hydroxymethyltransferase 1 (438 aa).

(6S)-5,6,7,8-tetrahydrofolate is bound by residues Leu130 and 134 to 136; that span reads GHL. N6-(pyridoxal phosphate)lysine is present on Lys239.

This sequence belongs to the SHMT family. In terms of assembly, homodimer. Requires pyridoxal 5'-phosphate as cofactor.

The protein localises to the cytoplasm. The catalysed reaction is (6R)-5,10-methylene-5,6,7,8-tetrahydrofolate + glycine + H2O = (6S)-5,6,7,8-tetrahydrofolate + L-serine. It functions in the pathway one-carbon metabolism; tetrahydrofolate interconversion. The protein operates within amino-acid biosynthesis; glycine biosynthesis; glycine from L-serine: step 1/1. Functionally, catalyzes the reversible interconversion of serine and glycine with tetrahydrofolate (THF) serving as the one-carbon carrier. This reaction serves as the major source of one-carbon groups required for the biosynthesis of purines, thymidylate, methionine, and other important biomolecules. Also exhibits THF-independent aldolase activity toward beta-hydroxyamino acids, producing glycine and aldehydes, via a retro-aldol mechanism. Thus, is able to catalyze the cleavage of L-allo-threonine. The sequence is that of Serine hydroxymethyltransferase 1 from Mycobacterium tuberculosis (strain ATCC 25618 / H37Rv).